A 363-amino-acid polypeptide reads, in one-letter code: Protein-arginine kinase (363 aa).

Residues 24-255 (IVLSSRIRLA…EQLIAQERAA (232 aa)) form the Phosphagen kinase C-terminal domain. ATP-binding positions include 27–31 (SSRIR), His92, Arg126, 177–181 (RASVM), and 208–213 (RGTYGE). The RDXXRA motif of the pArg binding pocket involved in allosteric regulation signature appears at 338 to 343 (RDVRRA).

Belongs to the ATP:guanido phosphotransferase family. As to quaternary structure, homodimer. Dimerization is important for full catalytic activity.

The catalysed reaction is L-arginyl-[protein] + ATP = N(omega)-phospho-L-arginyl-[protein] + ADP + H(+). Appears to be allosterically activated by the binding of pArg-containing polypeptides to the pArg-binding pocket localized in the C-terminal domain of McsB. Functionally, catalyzes the specific phosphorylation of arginine residues in a large number of proteins. Is part of the bacterial stress response system, where it is involved in regulating the global heat shock repressor CtsR; phosphorylates arginine residues in the winged helix-turn-helix domain of CtsR, thereby preventing its binding to DNA and consequently inducing the expression of repressed genes. Protein arginine phosphorylation has a physiologically important role and is involved in the regulation of many critical cellular processes, such as protein homeostasis, motility, competence, and stringent and stress responses, by regulating gene expression and protein activity. Acts exclusively on Arg residues, since it cannot phosphorylate Tyr, Ser, Thr, His, Asp and Lys. Has no free arginine kinase activity. This chain is Protein-arginine kinase, found in Geobacillus stearothermophilus (Bacillus stearothermophilus).